A 291-amino-acid chain; its full sequence is Small ribosomal subunit protein uS2 (291 aa).

A disordered region spans residues 256–291 (STTAPPNWEATGGDWATSTAPAEGWAGDAPAGETKW).

This sequence belongs to the universal ribosomal protein uS2 family. In terms of assembly, component of the small ribosomal subunit. Mature ribosomes consist of a small (40S) and a large (60S) subunit. The 40S subunit contains about 33 different proteins and 1 molecule of RNA (18S). The 60S subunit contains about 49 different proteins and 3 molecules of RNA (25S, 5.8S and 5S). Interacts with RPS21.

It localises to the cytoplasm. Functionally, required for the assembly and/or stability of the 40S ribosomal subunit. Required for the processing of the 20S rRNA-precursor to mature 18S rRNA in a late step of the maturation of 40S ribosomal subunits. In Coccidioides immitis (strain RS) (Valley fever fungus), this protein is Small ribosomal subunit protein uS2.